The sequence spans 397 residues: Anhydro-N-acetylmuramic acid kinase (397 aa).

21–28 (GTSLDGVD) contacts ATP. A compositionally biased stretch (polar residues) spans 373–384 (TPTNLPSVTGAS). A disordered region spans residues 373 to 397 (TPTNLPSVTGASARTPLGSLSVPGP).

The protein belongs to the anhydro-N-acetylmuramic acid kinase family.

It catalyses the reaction 1,6-anhydro-N-acetyl-beta-muramate + ATP + H2O = N-acetyl-D-muramate 6-phosphate + ADP + H(+). It participates in amino-sugar metabolism; 1,6-anhydro-N-acetylmuramate degradation. It functions in the pathway cell wall biogenesis; peptidoglycan recycling. Catalyzes the specific phosphorylation of 1,6-anhydro-N-acetylmuramic acid (anhMurNAc) with the simultaneous cleavage of the 1,6-anhydro ring, generating MurNAc-6-P. Is required for the utilization of anhMurNAc either imported from the medium or derived from its own cell wall murein, and thus plays a role in cell wall recycling. In Salinibacter ruber (strain DSM 13855 / M31), this protein is Anhydro-N-acetylmuramic acid kinase.